We begin with the raw amino-acid sequence, 320 residues long: SPX domain-containing protein 4 (320 aa).

One can recognise an SPX domain in the interval 1-170; it reads MKFGKDFRSH…GGLLSLPFTQ (170 aa). 2 disordered regions span residues 209–233 and 275–320; these read SSSAKLQPQNDDAASHDPASSVDVE and CSGA…PRDE. Positions 278–289 are enriched in polar residues; sequence AITSESDSYSDS. The segment covering 290–299 has biased composition (acidic residues); sequence QIEDAEDDDK. A compositionally biased stretch (polar residues) spans 304–313; the sequence is REQNTAQNAA.

Homodimer. Interacts (via N-terminus) with PHR2 (via C-terminus) in the presence of inositol polyphosphate. Interacts with BHLH6. In terms of processing, degraded under Pi starvation conditions through the ubiquitin/26S proteasome pathway. Widely expressed. Detected in root cells, with the exception of epidermis, and in mesophyll and vascular bundles in leaves.

The protein resides in the membrane. The protein localises to the nucleus. It is found in the cytoplasm. Its function is as follows. Inositol polyphosphate sensor that associates with transcription factors to regulate Pi starvation responses. The SPX domain provides a basic binding surface for inositol polyphosphate signaling molecules. Interacts with PHR2 to inhibit its translocation to the nucleus and repress its DNA-binding activity, and then negatively regulate Pi signaling. The sequence is that of SPX domain-containing protein 4 from Oryza sativa subsp. japonica (Rice).